Here is an 89-residue protein sequence, read N- to C-terminus: Large ribosomal subunit protein bL27 (89 aa).

The tract at residues 1–24 is disordered; the sequence is MAHKKAGGSSRNGRDSDGRRLGVK.

It belongs to the bacterial ribosomal protein bL27 family.

The chain is Large ribosomal subunit protein bL27 from Azorhizobium caulinodans (strain ATCC 43989 / DSM 5975 / JCM 20966 / LMG 6465 / NBRC 14845 / NCIMB 13405 / ORS 571).